Here is a 232-residue protein sequence, read N- to C-terminus: Large ribosomal subunit protein uL1 (232 aa).

Belongs to the universal ribosomal protein uL1 family. In terms of assembly, part of the 50S ribosomal subunit.

Binds directly to 23S rRNA. The L1 stalk is quite mobile in the ribosome, and is involved in E site tRNA release. Its function is as follows. Protein L1 is also a translational repressor protein, it controls the translation of the L11 operon by binding to its mRNA. This Parabacteroides distasonis (strain ATCC 8503 / DSM 20701 / CIP 104284 / JCM 5825 / NCTC 11152) protein is Large ribosomal subunit protein uL1.